The following is a 264-amino-acid chain: Ubiquinone biosynthesis protein COQ4 homolog, mitochondrial (264 aa).

Residues 1–26 constitute a mitochondrion transit peptide; sequence MMQRCWQISLPLARRRLIPSLTSKRT. Residues His-169, Asp-170, His-173, and Glu-185 each coordinate Zn(2+).

It belongs to the COQ4 family. As to quaternary structure, component of a multi-subunit COQ enzyme complex. The cofactor is Zn(2+).

It localises to the mitochondrion inner membrane. The catalysed reaction is a 4-hydroxy-3-methoxy-5-(all-trans-polyprenyl)benzoate + H(+) = a 2-methoxy-6-(all-trans-polyprenyl)phenol + CO2. Its pathway is cofactor biosynthesis; ubiquinone biosynthesis. Functionally, lyase that catalyzes the C1-decarboxylation of 4-hydroxy-3-methoxy-5-(all-trans-polyprenyl)benzoic acid into 2-methoxy-6-(all-trans-polyprenyl)phenol during ubiquinone biosynthesis. The protein is Ubiquinone biosynthesis protein COQ4 homolog, mitochondrial of Drosophila grimshawi (Hawaiian fruit fly).